Here is a 260-residue protein sequence, read N- to C-terminus: 1-(5-phosphoribosyl)-5-[(5-phosphoribosylamino)methylideneamino] imidazole-4-carboxamide isomerase (260 aa).

D8 (proton acceptor) is an active-site residue. D130 serves as the catalytic Proton donor.

Belongs to the HisA/HisF family.

Its subcellular location is the cytoplasm. The catalysed reaction is 1-(5-phospho-beta-D-ribosyl)-5-[(5-phospho-beta-D-ribosylamino)methylideneamino]imidazole-4-carboxamide = 5-[(5-phospho-1-deoxy-D-ribulos-1-ylimino)methylamino]-1-(5-phospho-beta-D-ribosyl)imidazole-4-carboxamide. It participates in amino-acid biosynthesis; L-histidine biosynthesis; L-histidine from 5-phospho-alpha-D-ribose 1-diphosphate: step 4/9. The polypeptide is 1-(5-phosphoribosyl)-5-[(5-phosphoribosylamino)methylideneamino] imidazole-4-carboxamide isomerase (Chlorobaculum parvum (strain DSM 263 / NCIMB 8327) (Chlorobium vibrioforme subsp. thiosulfatophilum)).